The sequence spans 366 residues: Chorismate synthase (366 aa).

Residues Arg48 and Arg54 each contribute to the NADP(+) site. FMN is bound by residues 125–127 (RSS), 241–242 (NA), Gly285, 300–304 (KPTSS), and Arg326.

The protein belongs to the chorismate synthase family. As to quaternary structure, homotetramer. The cofactor is FMNH2.

The enzyme catalyses 5-O-(1-carboxyvinyl)-3-phosphoshikimate = chorismate + phosphate. It participates in metabolic intermediate biosynthesis; chorismate biosynthesis; chorismate from D-erythrose 4-phosphate and phosphoenolpyruvate: step 7/7. Functionally, catalyzes the anti-1,4-elimination of the C-3 phosphate and the C-6 proR hydrogen from 5-enolpyruvylshikimate-3-phosphate (EPSP) to yield chorismate, which is the branch point compound that serves as the starting substrate for the three terminal pathways of aromatic amino acid biosynthesis. This reaction introduces a second double bond into the aromatic ring system. This Cereibacter sphaeroides (strain ATCC 17023 / DSM 158 / JCM 6121 / CCUG 31486 / LMG 2827 / NBRC 12203 / NCIMB 8253 / ATH 2.4.1.) (Rhodobacter sphaeroides) protein is Chorismate synthase.